Consider the following 339-residue polypeptide: Biotin synthase (339 aa).

One can recognise a Radical SAM core domain in the interval N55–R282. The [4Fe-4S] cluster site is built by C70, C74, and C77. 4 residues coordinate [2Fe-2S] cluster: C114, C145, C205, and R277.

This sequence belongs to the radical SAM superfamily. Biotin synthase family. Homodimer. The cofactor is [4Fe-4S] cluster. [2Fe-2S] cluster serves as cofactor.

It carries out the reaction (4R,5S)-dethiobiotin + (sulfur carrier)-SH + 2 reduced [2Fe-2S]-[ferredoxin] + 2 S-adenosyl-L-methionine = (sulfur carrier)-H + biotin + 2 5'-deoxyadenosine + 2 L-methionine + 2 oxidized [2Fe-2S]-[ferredoxin]. It functions in the pathway cofactor biosynthesis; biotin biosynthesis; biotin from 7,8-diaminononanoate: step 2/2. In terms of biological role, catalyzes the conversion of dethiobiotin (DTB) to biotin by the insertion of a sulfur atom into dethiobiotin via a radical-based mechanism. The chain is Biotin synthase from Burkholderia orbicola (strain MC0-3).